A 340-amino-acid polypeptide reads, in one-letter code: Ferredoxin--NADP reductase (340 aa).

Asp33, Gln41, Tyr46, Ala86, Phe120, Asp286, and Thr327 together coordinate FAD.

This sequence belongs to the ferredoxin--NADP reductase type 2 family. As to quaternary structure, homodimer. The cofactor is FAD.

The enzyme catalyses 2 reduced [2Fe-2S]-[ferredoxin] + NADP(+) + H(+) = 2 oxidized [2Fe-2S]-[ferredoxin] + NADPH. This is Ferredoxin--NADP reductase from Rickettsia conorii (strain ATCC VR-613 / Malish 7).